Here is a 117-residue protein sequence, read N- to C-terminus: Large ribosomal subunit protein bL20 (117 aa).

The protein belongs to the bacterial ribosomal protein bL20 family.

Binds directly to 23S ribosomal RNA and is necessary for the in vitro assembly process of the 50S ribosomal subunit. It is not involved in the protein synthesizing functions of that subunit. The chain is Large ribosomal subunit protein bL20 from Carboxydothermus hydrogenoformans (strain ATCC BAA-161 / DSM 6008 / Z-2901).